Consider the following 743-residue polypeptide: Catalase-peroxidase (743 aa).

Residues 1-21 form a disordered region; it reads MSENHETVVSELNEESGGGCP. Positions 108–231 form a cross-link, tryptophyl-tyrosyl-methioninium (Trp-Tyr) (with M-257); sequence WHSAGTYRIS…LGAVQMGLIY (124 aa). Histidine 109 (proton acceptor) is an active-site residue. The tryptophyl-tyrosyl-methioninium (Tyr-Met) (with W-108) cross-link spans 231–257; it reads YVNPEGPNGTPDPLAAARDIRETFRRM. Histidine 272 lines the heme b pocket. The segment at 275–296 is disordered; sequence GKTHGAGDPDNVGPEPEGAPLE.

The protein belongs to the peroxidase family. Peroxidase/catalase subfamily. As to quaternary structure, homodimer or homotetramer. Heme b is required as a cofactor. Post-translationally, formation of the three residue Trp-Tyr-Met cross-link is important for the catalase, but not the peroxidase activity of the enzyme.

The enzyme catalyses H2O2 + AH2 = A + 2 H2O. It catalyses the reaction 2 H2O2 = O2 + 2 H2O. Bifunctional enzyme with both catalase and broad-spectrum peroxidase activity. The sequence is that of Catalase-peroxidase from Parafrankia sp. (strain EAN1pec).